A 371-amino-acid polypeptide reads, in one-letter code: NDMA-dependent alcohol dehydrogenase (371 aa).

Residues Cys40, His61, Cys91, Cys94, Cys97, Cys105, and Cys167 each contribute to the Zn(2+) site.

The protein belongs to the zinc-containing alcohol dehydrogenase family. Homotrimer. NADH serves as cofactor.

It catalyses the reaction N,N-dimethyl-4-nitrosoaniline + a primary alcohol = 4-(hydroxylamino)-N,N-dimethylaniline + an aldehyde. The enzyme catalyses ethanol + A = acetaldehyde + AH2. Inhibited by trans-4-(N,N-dimethylamino)-cinnamaldehyde through direct binding to the catalytic zinc ion in a substrate-like geometry. Isobutyramide acts as a competitive inhibitor with respect to the electron acceptor NDMA. Acetaldehyde, AMP, ADP, ATP, as well as CuSO(4), FeSO(4), HgCl(2), NiCl(2), ZnSO(4), KCN, and NaN(3) are additional inhibitors of the catalytic activity. Catalytically different from common alcohol dehydrogenases. Effective in oxidizing ethanol, other primary alcohols and benzylalcohol only in the presence of p-nitroso-N,N-dimethylaniline (NDMA) as an electron acceptor. NADH acts as a cofactor here instead as a coenzyme. The protein is NDMA-dependent alcohol dehydrogenase of Amycolatopsis methanolica.